A 464-amino-acid chain; its full sequence is MVQEACSPIGPALGDAAPGFGTDGIRGLAGTVLTPALCLQVGYWVGRVLQAEGPVLIGMDSRTSGSMVVAALTAGLTAAGRDVWTLGLCPTPAVPLLIRQLGVAGGLMVSASHNPPADNGIKVFGVDGAKLSASRQAQVEACLKGQTSMAEQGKFRCGVARPSADLLDRYREVLQESVAERRLDGVPIVLDLCWGSATACGADAFRALGADLTVLHGEPDGSRINVACGSTHLEPLQRAVIERGAAMGFAFDGDADRMLAVDGRGRIIDGDHVLFLWGSVLQEQQALPEQRLVATVMSNLGFERAWQQRGGTLERTPVGDQHVHAAMVASGAALGGEQSGHILSASHGLCGDGVLTAVQLATLCYAQGISLSDWLDRSFQAYPQKLVNVRVMDRARRKNWSACTALTDAIASAEQSMGENGRILVRASGTEPVLRVMVEAEQSDAVEHLTGHLAAVAEEHLNVA.

S112 (phosphoserine intermediate) is an active-site residue. Residues S112, D252, D254, and D256 each coordinate Mg(2+). Residue S112 is modified to Phosphoserine.

This sequence belongs to the phosphohexose mutase family. Mg(2+) serves as cofactor. In terms of processing, activated by phosphorylation.

The enzyme catalyses alpha-D-glucosamine 1-phosphate = D-glucosamine 6-phosphate. In terms of biological role, catalyzes the conversion of glucosamine-6-phosphate to glucosamine-1-phosphate. The chain is Phosphoglucosamine mutase from Synechococcus sp. (strain CC9605).